A 229-amino-acid chain; its full sequence is DNA mismatch repair protein MutH (229 aa).

Belongs to the MutH family.

The protein localises to the cytoplasm. Functionally, sequence-specific endonuclease that cleaves unmethylated GATC sequences. It is involved in DNA mismatch repair. The sequence is that of DNA mismatch repair protein MutH from Escherichia coli O127:H6 (strain E2348/69 / EPEC).